The chain runs to 338 residues: D-erythrose-4-phosphate dehydrogenase (338 aa).

12–13 (RI) is an NAD(+) binding site. Substrate is bound by residues 154–156 (SCT), R200, 213–214 (TK), and R236. Catalysis depends on C155, which acts as the Nucleophile. N318 contributes to the NAD(+) binding site.

Belongs to the glyceraldehyde-3-phosphate dehydrogenase family. Epd subfamily. In terms of assembly, homotetramer.

It is found in the cytoplasm. It catalyses the reaction D-erythrose 4-phosphate + NAD(+) + H2O = 4-phospho-D-erythronate + NADH + 2 H(+). Its pathway is cofactor biosynthesis; pyridoxine 5'-phosphate biosynthesis; pyridoxine 5'-phosphate from D-erythrose 4-phosphate: step 1/5. Functionally, catalyzes the NAD-dependent conversion of D-erythrose 4-phosphate to 4-phosphoerythronate. The chain is D-erythrose-4-phosphate dehydrogenase from Yersinia enterocolitica serotype O:8 / biotype 1B (strain NCTC 13174 / 8081).